The sequence spans 616 residues: Dihydroxy-acid dehydratase (616 aa).

Asp-81 contributes to the Mg(2+) binding site. Cys-122 serves as a coordination point for [2Fe-2S] cluster. Asp-123 and Lys-124 together coordinate Mg(2+). An N6-carboxylysine modification is found at Lys-124. Cys-195 contacts [2Fe-2S] cluster. Glu-491 is a Mg(2+) binding site. The active-site Proton acceptor is Ser-517.

It belongs to the IlvD/Edd family. In terms of assembly, homodimer. [2Fe-2S] cluster serves as cofactor. The cofactor is Mg(2+).

It carries out the reaction (2R)-2,3-dihydroxy-3-methylbutanoate = 3-methyl-2-oxobutanoate + H2O. It catalyses the reaction (2R,3R)-2,3-dihydroxy-3-methylpentanoate = (S)-3-methyl-2-oxopentanoate + H2O. The protein operates within amino-acid biosynthesis; L-isoleucine biosynthesis; L-isoleucine from 2-oxobutanoate: step 3/4. It participates in amino-acid biosynthesis; L-valine biosynthesis; L-valine from pyruvate: step 3/4. In terms of biological role, functions in the biosynthesis of branched-chain amino acids. Catalyzes the dehydration of (2R,3R)-2,3-dihydroxy-3-methylpentanoate (2,3-dihydroxy-3-methylvalerate) into 2-oxo-3-methylpentanoate (2-oxo-3-methylvalerate) and of (2R)-2,3-dihydroxy-3-methylbutanoate (2,3-dihydroxyisovalerate) into 2-oxo-3-methylbutanoate (2-oxoisovalerate), the penultimate precursor to L-isoleucine and L-valine, respectively. The chain is Dihydroxy-acid dehydratase from Blochmanniella pennsylvanica (strain BPEN).